Here is a 116-residue protein sequence, read N- to C-terminus: Large ribosomal subunit protein uL18 (116 aa).

Belongs to the universal ribosomal protein uL18 family. In terms of assembly, part of the 50S ribosomal subunit; part of the 5S rRNA/L5/L18/L25 subcomplex. Contacts the 5S and 23S rRNAs.

Its function is as follows. This is one of the proteins that bind and probably mediate the attachment of the 5S RNA into the large ribosomal subunit, where it forms part of the central protuberance. The chain is Large ribosomal subunit protein uL18 from Caulobacter vibrioides (strain ATCC 19089 / CIP 103742 / CB 15) (Caulobacter crescentus).